Consider the following 171-residue polypeptide: Ribosome maturation factor RimM (171 aa).

A PRC barrel domain is found at 96–170; sequence AEGEYYYHEI…LVTIHVMEGL (75 aa).

Belongs to the RimM family. Binds ribosomal protein uS19.

Its subcellular location is the cytoplasm. Its function is as follows. An accessory protein needed during the final step in the assembly of 30S ribosomal subunit, possibly for assembly of the head region. Essential for efficient processing of 16S rRNA. May be needed both before and after RbfA during the maturation of 16S rRNA. It has affinity for free ribosomal 30S subunits but not for 70S ribosomes. The chain is Ribosome maturation factor RimM from Bacillus mycoides (strain KBAB4) (Bacillus weihenstephanensis).